The sequence spans 153 residues: Cofilin (153 aa).

An ADF-H domain is found at 4–148 (SGATVSQDCI…EYDSILKTVS (145 aa)).

Belongs to the actin-binding proteins ADF family.

It localises to the cytoplasm. It is found in the cytoskeleton. The protein resides in the nucleus matrix. Controls reversibly actin polymerization and depolymerization in a pH-sensitive manner. It has the ability to bind G- and F-actin in a 1:1 ratio of cofilin to actin. Binding to F-actin is regulated by tropomyosin. It is the major component of intranuclear and cytoplasmic actin rods. Required for accumulation of actin at the cell division site via depolymerizing actin at the cell ends. In association with myosin II has a role in the assembly of the contractile ring via severing actin filaments. Involved in the maintenance of the contractile ring once formed. In association with profilin and capping protein, has a role in the mitotic reorganization of the actin cytoskeleton. This chain is Cofilin (COF1), found in Gibberella zeae (strain ATCC MYA-4620 / CBS 123657 / FGSC 9075 / NRRL 31084 / PH-1) (Wheat head blight fungus).